Here is a 319-residue protein sequence, read N- to C-terminus: Methionyl-tRNA formyltransferase (319 aa).

112–115 (SILP) is a binding site for (6S)-5,6,7,8-tetrahydrofolate.

This sequence belongs to the Fmt family.

The catalysed reaction is L-methionyl-tRNA(fMet) + (6R)-10-formyltetrahydrofolate = N-formyl-L-methionyl-tRNA(fMet) + (6S)-5,6,7,8-tetrahydrofolate + H(+). Its function is as follows. Attaches a formyl group to the free amino group of methionyl-tRNA(fMet). The formyl group appears to play a dual role in the initiator identity of N-formylmethionyl-tRNA by promoting its recognition by IF2 and preventing the misappropriation of this tRNA by the elongation apparatus. The protein is Methionyl-tRNA formyltransferase of Shewanella denitrificans (strain OS217 / ATCC BAA-1090 / DSM 15013).